The primary structure comprises 325 residues: Elongation factor P--(R)-beta-lysine ligase (325 aa).

Position 76 to 78 (76 to 78 (SPE)) interacts with substrate. ATP is bound by residues 100–102 (RNE) and N109. Y118 lines the substrate pocket. 244–245 (EL) contacts ATP. E251 contacts substrate. Position 300 (G300) interacts with ATP.

This sequence belongs to the class-II aminoacyl-tRNA synthetase family. EpmA subfamily. Homodimer.

It catalyses the reaction D-beta-lysine + L-lysyl-[protein] + ATP = N(6)-((3R)-3,6-diaminohexanoyl)-L-lysyl-[protein] + AMP + diphosphate + H(+). With EpmB is involved in the beta-lysylation step of the post-translational modification of translation elongation factor P (EF-P). Catalyzes the ATP-dependent activation of (R)-beta-lysine produced by EpmB, forming a lysyl-adenylate, from which the beta-lysyl moiety is then transferred to the epsilon-amino group of a conserved specific lysine residue in EF-P. The sequence is that of Elongation factor P--(R)-beta-lysine ligase from Enterobacter sp. (strain 638).